Here is a 428-residue protein sequence, read N- to C-terminus: MKIINEDLASLKRLVQTKTQQLTDLKVESAVREIIANVIKNGDAAVKDYETQFDKVTLTDFKLSQTVIDDAYNNLDPQVKDALLLAKRNITSFHEKEKATGFIDAEQPGVLRGQKLMPLNRVGLYVPGGTAAYPSTLLMSALPAKIAGVNEVIMVTPPQVDGINPAVLAAAKIAGVDAIYQVGGAQAIAALAYGTESIPAVDKIIGPGNIFVATAKKQVFGQVAIDMVAGPSEIGILADDSADPRQLAADLLSQAEHDRRARPILITDSADLAQAVSDNVTSQLKVLPREAIATDAVNEKGFIAVVAKIEEMFDLMNTVAPEHLEVQLKNPTQYLNLIKNAGSVFLGRYASEPLGDYVAGPNHILPTSGTARFSSPLGVYDFVKRTSFIQYTKDALAKEAPAITTLARVEGLEGHARAIESRFDTYYD.

Positions 125, 186, and 209 each coordinate NAD(+). The substrate site is built by S232, Q254, and H257. 2 residues coordinate Zn(2+): Q254 and H257. Catalysis depends on proton acceptor residues E322 and H323. H323, D356, E410, and H415 together coordinate substrate. D356 contributes to the Zn(2+) binding site. H415 serves as a coordination point for Zn(2+).

The protein belongs to the histidinol dehydrogenase family. Zn(2+) serves as cofactor.

The catalysed reaction is L-histidinol + 2 NAD(+) + H2O = L-histidine + 2 NADH + 3 H(+). Its pathway is amino-acid biosynthesis; L-histidine biosynthesis; L-histidine from 5-phospho-alpha-D-ribose 1-diphosphate: step 9/9. Its function is as follows. Catalyzes the sequential NAD-dependent oxidations of L-histidinol to L-histidinaldehyde and then to L-histidine. This chain is Histidinol dehydrogenase, found in Lactiplantibacillus plantarum (strain ATCC BAA-793 / NCIMB 8826 / WCFS1) (Lactobacillus plantarum).